The following is a 306-amino-acid chain: MWKRWLALSLVTIALVHGEEEPRSKSKICANVFCGAGRECAVTEKGEPTCLCIEQCKPHKRPVCGSNGKTYLNHCELHRDACLTGSKIQVDYDGHCKEKKSASPSASPVVCYQANRDELRRRLIQWLEAEIIPDGWFSKGSNYSEILDKYFKSFDNGDSHLDSSEFLKFVEQNETAINITTYADQENNKLLRSLCVDALIELSDENADWKLSFQEFLKCLNPSFNPPEKKCALEDETYADGAETEVDCNRCVCSCGHWVCTAMTCDGKNQKGVQTHTEEEKTGYVQELQKHQGTAEKTKKVNTKEI.

The N-terminal stretch at 1-18 (MWKRWLALSLVTIALVHG) is a signal peptide. Positions 28 to 51 (ICANVFCGAGRECAVTEKGEPTCL) constitute a Follistatin-like domain. 5 disulfides stabilise this stretch: Cys29-Cys40, Cys34-Cys50, Cys52-Cys82, Cys56-Cys75, and Cys64-Cys96. Residues 46 to 98 (GEPTCLCIEQCKPHKRPVCGSNGKTYLNHCELHRDACLTGSKIQVDYDGHCKE) form the Kazal-like domain. N-linked (GlcNAc...) asparagine glycosylation is present at Asn142. The 35-residue stretch at 142 to 176 (NYSEILDKYFKSFDNGDSHLDSSEFLKFVEQNETA) folds into the EF-hand 1 domain. The residue at position 163 (Ser163) is a Phosphoserine. N-linked (GlcNAc...) asparagine glycans are attached at residues Asn173 and Asn178. The region spanning 191 to 226 (LRSLCVDALIELSDENADWKLSFQEFLKCLNPSFNP) is the EF-hand 2 domain. In terms of domain architecture, VWFC spans 231–285 (CALEDETYADGAETEVDCNRCVCSCGHWVCTAMTCDGKNQKGVQTHTEEEKTGYV).

As to quaternary structure, homodimer. Interacts with SCN10A. Interacts with DIP2A; DIP2A may act as a cell surface receptor for FSTL1. Interacts with BMP4. Interacts with CD14; this interaction promotes TL4-mediated signaling cascade. During central nervous system development, strongly expressed in the telencephalon, diencephalon, brainstem, limbic system and spinal cord. Widely expressed in all organs.

It localises to the secreted. Secreted glycoprotein that is involved in various physiological processes, such as angiogenesis, regulation of the immune response, cell proliferation and differentiation. Plays a role in the development of the central nervous system, skeletal system, lungs, and ureter. Promotes endothelial cell survival, migration and differentiation into network structures in an AKT-dependent manner. Also promotes survival of cardiac myocytes. Initiates various signaling cascades by activating different receptors on the cell surface such as DIP2A, TLR4 or BMP receptors. This is Follistatin-related protein 1 (Fstl1) from Mus musculus (Mouse).